The following is a 430-amino-acid chain: MREFMHYVTNAFYGATGWNDDNTYKELNVTARELIDFPLPRGLRLTLSSLATPHFATSYQLGSVGIVDGSISYLHSSVPLTGIAARSDRIPLPALLRSYRRLHDLGSKDQQQYVGAEHAPTESTPPAVAKVDGSSLLYGRLYLPQSLLEGMVVRRFTPALQVQLSAVSERSLRNGGTLLGLVQYDKRKYGVEGLASTDGGLLGVRGLYNFGGDASSSAMNPPSGTSASETNGSGPSVEKERIYGRFSAGAELYYGTLNKSGGMSLGARFATLPAHRGTPLTATLTINPLMGNINATYAVLAREYCSLATKMEFNVYSYESEWAVGVELWSNRRPAGFLLGANPNDQAEPAPEPPRKSNERSFQAKMEWRLDDPEPEPQSPVAGEKSADDGPKEEYKGVLKARFDQNFRFGLLWEGRVKSLIFSLGTGRSD.

A compositionally biased stretch (polar residues) spans 215–234; it reads SSSAMNPPSGTSASETNGSG. Disordered regions lie at residues 215–237 and 339–393; these read SSSA…GPSV and LGAN…GPKE.

It belongs to the MDM10 family. As to quaternary structure, component of the ER-mitochondria encounter structure (ERMES) or MDM complex, composed of MMM1, MDM10, MDM12 and MDM34. Associates with the mitochondrial outer membrane sorting assembly machinery SAM(core) complex.

It localises to the mitochondrion outer membrane. In terms of biological role, component of the ERMES/MDM complex, which serves as a molecular tether to connect the endoplasmic reticulum and mitochondria. Components of this complex are involved in the control of mitochondrial shape and protein biogenesis and may function in phospholipid exchange. MDM10 is involved in the late assembly steps of the general translocase of the mitochondrial outer membrane (TOM complex). Functions in the TOM40-specific route of the assembly of outer membrane beta-barrel proteins, including the association of TOM40 with the receptor TOM22 and small TOM proteins. Can associate with the SAM(core) complex as well as the MDM12-MMM1 complex, both involved in late steps of the major beta-barrel assembly pathway, that is responsible for biogenesis of all outer membrane beta-barrel proteins. May act as a switch that shuttles between both complexes and channels precursor proteins into the TOM40-specific pathway. Plays a role in mitochondrial morphology and in the inheritance of mitochondria. In Chaetomium globosum (strain ATCC 6205 / CBS 148.51 / DSM 1962 / NBRC 6347 / NRRL 1970) (Soil fungus), this protein is Mitochondrial distribution and morphology protein 10.